The primary structure comprises 276 residues: Diaminopimelate epimerase (276 aa).

3 residues coordinate substrate: N13, Q46, and N66. C75 serves as the catalytic Proton donor. Residues 76–77 (GN), N159, N192, and 210–211 (ER) contribute to the substrate site. Residue C219 is the Proton acceptor of the active site. A substrate-binding site is contributed by 220–221 (GT).

It belongs to the diaminopimelate epimerase family. As to quaternary structure, homodimer.

It localises to the cytoplasm. The enzyme catalyses (2S,6S)-2,6-diaminopimelate = meso-2,6-diaminopimelate. It functions in the pathway amino-acid biosynthesis; L-lysine biosynthesis via DAP pathway; DL-2,6-diaminopimelate from LL-2,6-diaminopimelate: step 1/1. Catalyzes the stereoinversion of LL-2,6-diaminopimelate (L,L-DAP) to meso-diaminopimelate (meso-DAP), a precursor of L-lysine and an essential component of the bacterial peptidoglycan. The sequence is that of Diaminopimelate epimerase from Pseudomonas aeruginosa (strain LESB58).